A 472-amino-acid chain; its full sequence is Estrogen receptor beta (472 aa).

Residues 1 to 104 (MAFCSPAMMN…NPGSKRDAHF (104 aa)) are modulating. 2 NR C4-type zinc fingers span residues 105 to 125 (CAVC…CEGC) and 141 to 165 (CPAT…LRKC). The segment at residues 105–170 (CAVCSDYASG…RLRKCYEVGM (66 aa)) is a DNA-binding region (nuclear receptor). In terms of domain architecture, NR LBD spans 217–449 (SPEQFVLTLL…DLLLEMLNAH (233 aa)).

It belongs to the nuclear hormone receptor family. NR3 subfamily. In terms of assembly, binds DNA as a homodimer. Can form a heterodimer with ER-alpha. As to expression, a high expression is seen in the telencephalon, diencephalon, pituitary, testis and kidneys but little or no expression is seen in the cerebellum, pectoral muscle and adrenal gland.

It is found in the nucleus. Binds estrogens with an affinity similar to that of ER-alpha, and activates expression of reporter genes containing estrogen response elements (ERE) in an estrogen-dependent manner. This is Estrogen receptor beta (ESR2) from Coturnix japonica (Japanese quail).